A 370-amino-acid chain; its full sequence is DNA replication and repair protein RecF (370 aa).

An ATP-binding site is contributed by 30–37 (GENAQGKT).

Belongs to the RecF family.

It is found in the cytoplasm. The RecF protein is involved in DNA metabolism; it is required for DNA replication and normal SOS inducibility. RecF binds preferentially to single-stranded, linear DNA. It also seems to bind ATP. The chain is DNA replication and repair protein RecF from Bacillus velezensis (strain DSM 23117 / BGSC 10A6 / LMG 26770 / FZB42) (Bacillus amyloliquefaciens subsp. plantarum).